An 82-amino-acid chain; its full sequence is Proline, histidine and glycine-rich protein 1 (82 aa).

Residues 20-82 (HCGPPPGHGP…PGHPPPGPHH (63 aa)) form a disordered region.

This chain is Proline, histidine and glycine-rich protein 1 (PHGR1), found in Homo sapiens (Human).